Reading from the N-terminus, the 759-residue chain is Mitogen-activated protein kinase kinase kinase 1a (759 aa).

3 stretches are compositionally biased toward basic and acidic residues: residues 1–17, 25–36, and 52–64; these read MIEE…DRGS, SFEDKGSSHDWK, and AKKD…KVDS. Disordered regions lie at residues 1 to 90, 122 to 160, 165 to 184, and 195 to 239; these read MIEE…NLSK, LGIE…SHDF, SRVD…LAPM, and RKHR…PDPL. The span at 72–85 shows a compositional bias: low complexity; sequence VHSTSSPRLSPASS. The Protein kinase domain maps to 426–679; sequence WAKGEFLGSG…CDMLLAHPFI (254 aa). ATP-binding positions include 432–440 and Lys-454; that span reads LGSGTFGSV. Residue Asp-549 is the Proton acceptor of the active site.

It belongs to the protein kinase superfamily. STE Ser/Thr protein kinase family. MAP kinase kinase kinase subfamily.

The protein localises to the cell membrane. The catalysed reaction is L-seryl-[protein] + ATP = O-phospho-L-seryl-[protein] + ADP + H(+). It catalyses the reaction L-threonyl-[protein] + ATP = O-phospho-L-threonyl-[protein] + ADP + H(+). Functionally, the CERK1, MEKK1a/b, MKK1a/b/c and MPK4a/b proteins are involved in pathogen defense. The pathway induces rapid growth inhibition, cell wall depositions and accumulation of defense-related transcripts. This protein is required for responses to chitin and acts redundantly with MEKK1b. The polypeptide is Mitogen-activated protein kinase kinase kinase 1a (Physcomitrium patens (Spreading-leaved earth moss)).